Here is a 662-residue protein sequence, read N- to C-terminus: DNA topoisomerase 4 subunit B (662 aa).

Residues tyrosine 20, asparagine 60, aspartate 87, 129–135 (GLHGVGI), and lysine 359 contribute to the ATP site. A Toprim domain is found at 439–553 (TELFIVEGDS…EGHLYLAKPP (115 aa)). Residues glutamate 445, aspartate 518, and aspartate 520 each coordinate Mg(2+).

It belongs to the type II topoisomerase family. ParE type 1 subfamily. In terms of assembly, heterotetramer composed of ParC and ParE. Mg(2+) is required as a cofactor. The cofactor is Mn(2+). Requires Ca(2+) as cofactor.

The enzyme catalyses ATP-dependent breakage, passage and rejoining of double-stranded DNA.. Functionally, topoisomerase IV is essential for chromosome segregation. It relaxes supercoiled DNA. Performs the decatenation events required during the replication of a circular DNA molecule. The sequence is that of DNA topoisomerase 4 subunit B from Rickettsia conorii (strain ATCC VR-613 / Malish 7).